Consider the following 298-residue polypeptide: Ribosomal RNA small subunit methyltransferase H (298 aa).

S-adenosyl-L-methionine-binding positions include 46 to 48 (GGH), Asp-65, Phe-92, Asp-108, and His-115.

This sequence belongs to the methyltransferase superfamily. RsmH family.

The protein resides in the cytoplasm. It carries out the reaction cytidine(1402) in 16S rRNA + S-adenosyl-L-methionine = N(4)-methylcytidine(1402) in 16S rRNA + S-adenosyl-L-homocysteine + H(+). Its function is as follows. Specifically methylates the N4 position of cytidine in position 1402 (C1402) of 16S rRNA. This Nostoc punctiforme (strain ATCC 29133 / PCC 73102) protein is Ribosomal RNA small subunit methyltransferase H.